The chain runs to 177 residues: Large ribosomal subunit protein uL6 (177 aa).

It belongs to the universal ribosomal protein uL6 family. Part of the 50S ribosomal subunit.

In terms of biological role, this protein binds to the 23S rRNA, and is important in its secondary structure. It is located near the subunit interface in the base of the L7/L12 stalk, and near the tRNA binding site of the peptidyltransferase center. The polypeptide is Large ribosomal subunit protein uL6 (Citrobacter koseri (strain ATCC BAA-895 / CDC 4225-83 / SGSC4696)).